The following is a 384-amino-acid chain: Transcription factor 7 (384 aa).

Positions 1 to 16 are enriched in gly residues; sequence MPQLDSGGGGAGGGDD. The segment at 1–59 is CTNNB1-binding; sequence MPQLDSGGGGAGGGDDLGAPDELLAFQDEGEEQDDKSRDSAAGPERDLAELKSSLVNES. Disordered regions lie at residues 1 to 88, 133 to 183, and 337 to 384; these read MPQL…LGRE, PPSG…QKQV, and SARD…MTVL. The segment covering 35-50 has biased composition (basic and acidic residues); sequence DKSRDSAAGPERDLAE. The span at 62 to 78 shows a compositional bias: gly residues; that stretch reads AAGGAGIPGVPGAGAGA. Positions 269–337 form a DNA-binding region, HMG box; that stretch reads IKKPLNAFML…LHMQLYPGWS (69 aa). A Nuclear localization signal motif is present at residues 344–348; the sequence is KKKRR. Residues 352–370 show a composition bias toward basic and acidic residues; the sequence is KHQESTTGGKRNAFGTYPE. Residues 374–384 are compositionally biased toward low complexity; it reads APAPFLPMTVL.

This sequence belongs to the TCF/LEF family. As to quaternary structure, binds the armadillo repeat of CTNNB1 and forms a stable complex. Interacts with TLE5, TLE1, TLE2, TLE3 and TLE4. Interacts with MLLT11. Long isoform interacts (via N-terminus) with SOX13; inhibits WNT-mediated transcriptional activity. Interacts with DAZAP2. Predominantly expressed in T-cells. Also detected in proliferating intestinal epithelial cells and in the basal epithelial cells of mammary gland epithelium.

It is found in the nucleus. Transcriptional activator involved in T-cell lymphocyte differentiation. Necessary for the survival of CD4(+) CD8(+) immature thymocytes. Isoforms lacking the N-terminal CTNNB1 binding domain cannot fulfill this role. Binds to the T-lymphocyte-specific enhancer element (5'-WWCAAAG-3') found in the promoter of the CD3E gene. Represses expression of the T-cell receptor gamma gene in alpha-beta T-cell lineages. Required for the development of natural killer receptor-positive lymphoid tissue inducer T-cells. TLE1, TLE2, TLE3 and TLE4 repress transactivation mediated by TCF7 and CTNNB1. May also act as feedback transcriptional repressor of CTNNB1 and TCF7L2 target genes. The polypeptide is Transcription factor 7 (Homo sapiens (Human)).